A 299-amino-acid chain; its full sequence is ATP phosphoribosyltransferase (299 aa).

The protein belongs to the ATP phosphoribosyltransferase family. Long subfamily. It depends on Mg(2+) as a cofactor.

The protein localises to the cytoplasm. The catalysed reaction is 1-(5-phospho-beta-D-ribosyl)-ATP + diphosphate = 5-phospho-alpha-D-ribose 1-diphosphate + ATP. Its pathway is amino-acid biosynthesis; L-histidine biosynthesis; L-histidine from 5-phospho-alpha-D-ribose 1-diphosphate: step 1/9. Feedback inhibited by histidine. Catalyzes the condensation of ATP and 5-phosphoribose 1-diphosphate to form N'-(5'-phosphoribosyl)-ATP (PR-ATP). Has a crucial role in the pathway because the rate of histidine biosynthesis seems to be controlled primarily by regulation of HisG enzymatic activity. This is ATP phosphoribosyltransferase from Shewanella halifaxensis (strain HAW-EB4).